The chain runs to 280 residues: Golgi to ER traffic protein 2 (280 aa).

Basic and acidic residues-rich tracts occupy residues 1 to 17, 44 to 62, and 71 to 80; these read MSLS…ERRQ, SALD…EAVK, and AKKESTAQAK. The disordered stretch occupies residues 1–80; that stretch reads MSLSEAEKRK…AKKESTAQAK (80 aa). Residues 1 to 146 lie on the Cytoplasmic side of the membrane; that stretch reads MSLSEAEKRK…VEYHKYRVNT (146 aa). Residues 147 to 166 traverse the membrane as a helical segment; it reads LTAKTTLVKWIVLLAYIFLL. At 167-191 the chain is on the lumenal side; the sequence is TRTDDTYFPFVVRSYLPEVFTSQSS. Residues 192–211 traverse the membrane as a helical segment; it reads FFSIFLTFEILATSIYYQLS. Topologically, residues 212–258 are cytoplasmic; the sequence is VGVERETGVKTLQDTSKIVSLVSMVPEGILPIADLRGKVILAMKYWN. The chain crosses the membrane as a helical span at residues 259 to 279; sequence IIAMMIGDVCFVLVAIGLVSQ. Isoleucine 280 is a topological domain (lumenal).

The protein belongs to the GET2 family. In terms of assembly, component of the Golgi to ER traffic (GET) complex, which is composed of GET1, GET2 and GET3. Within the complex, GET1 and GET2 form a heterotetramer which is stabilized by phosphatidylinositol binding and which binds to the GET3 homodimer.

It localises to the endoplasmic reticulum membrane. The protein localises to the golgi apparatus membrane. In terms of biological role, required for the post-translational delivery of tail-anchored (TA) proteins to the endoplasmic reticulum. Together with GET1, acts as a membrane receptor for soluble GET3, which recognizes and selectively binds the transmembrane domain of TA proteins in the cytosol. The GET complex cooperates with the HDEL receptor ERD2 to mediate the ATP-dependent retrieval of resident ER proteins that contain a C-terminal H-D-E-L retention signal from the Golgi to the ER. In Candida glabrata (strain ATCC 2001 / BCRC 20586 / JCM 3761 / NBRC 0622 / NRRL Y-65 / CBS 138) (Yeast), this protein is Golgi to ER traffic protein 2.